The following is a 444-amino-acid chain: Methylenetetrahydrofolate--tRNA-(uracil-5-)-methyltransferase TrmFO (444 aa).

10-15 (GAGLAG) contacts FAD.

Belongs to the MnmG family. TrmFO subfamily. Requires FAD as cofactor.

It localises to the cytoplasm. It catalyses the reaction uridine(54) in tRNA + (6R)-5,10-methylene-5,6,7,8-tetrahydrofolate + NADH + H(+) = 5-methyluridine(54) in tRNA + (6S)-5,6,7,8-tetrahydrofolate + NAD(+). It carries out the reaction uridine(54) in tRNA + (6R)-5,10-methylene-5,6,7,8-tetrahydrofolate + NADPH + H(+) = 5-methyluridine(54) in tRNA + (6S)-5,6,7,8-tetrahydrofolate + NADP(+). Functionally, catalyzes the folate-dependent formation of 5-methyl-uridine at position 54 (M-5-U54) in all tRNAs. In Streptococcus pneumoniae (strain 70585), this protein is Methylenetetrahydrofolate--tRNA-(uracil-5-)-methyltransferase TrmFO.